The primary structure comprises 435 residues: Methylenetetrahydrofolate--tRNA-(uracil-5-)-methyltransferase TrmFO (435 aa).

10 to 15 (GAGLAG) contributes to the FAD binding site.

It belongs to the MnmG family. TrmFO subfamily. Requires FAD as cofactor.

The protein localises to the cytoplasm. The catalysed reaction is uridine(54) in tRNA + (6R)-5,10-methylene-5,6,7,8-tetrahydrofolate + NADH + H(+) = 5-methyluridine(54) in tRNA + (6S)-5,6,7,8-tetrahydrofolate + NAD(+). It catalyses the reaction uridine(54) in tRNA + (6R)-5,10-methylene-5,6,7,8-tetrahydrofolate + NADPH + H(+) = 5-methyluridine(54) in tRNA + (6S)-5,6,7,8-tetrahydrofolate + NADP(+). Catalyzes the folate-dependent formation of 5-methyl-uridine at position 54 (M-5-U54) in all tRNAs. The chain is Methylenetetrahydrofolate--tRNA-(uracil-5-)-methyltransferase TrmFO from Geotalea uraniireducens (strain Rf4) (Geobacter uraniireducens).